The primary structure comprises 271 residues: Delta(7)-sterol-C5(6)-desaturase (271 aa).

Transmembrane regions (helical) follow at residues 44–64 (IGGVLLYFISGFLWCFYIYHL) and 120–140 (VGWLSYVIYAAIYLVIVEFGI). Positions 130–259 (AIYLVIVEFG…TIWMDWMFGT (130 aa)) constitute a Fatty acid hydroxylase domain. A Histidine box-1 motif is present at residues 144-148 (HMELH). Positions 158–162 (HATHH) match the Histidine box-2 motif. Residues 190–210 (HVVALLLVPMHFSTHIALIFL) traverse the membrane as a helical segment. Positions 235 to 239 (HTIHH) match the Histidine box-3 motif.

The protein belongs to the sterol desaturase family. Fe cation is required as a cofactor.

The protein resides in the endoplasmic reticulum membrane. It carries out the reaction a Delta(7)-sterol + 2 Fe(II)-[cytochrome b5] + O2 + 2 H(+) = a Delta(5),Delta(7)-sterol + 2 Fe(III)-[cytochrome b5] + 2 H2O. Its function is as follows. Involved in the biosynthesis of sitosterol and campesterol. The protein is Delta(7)-sterol-C5(6)-desaturase of Nicotiana tabacum (Common tobacco).